We begin with the raw amino-acid sequence, 137 residues long: Putative transcription elongation factor S-II-like protein 055R (137 aa).

The TFIIS-type zinc-finger motif lies at 85 to 136 (DFITCPYEVSEGVLRCGKCDCTKILWFSKQTRSMDEPTTIFASCSNCKTRWT). The Zn(2+) site is built by C89, C103, C128, and C131.

The protein belongs to the IIV-6 349L family.

The protein is Putative transcription elongation factor S-II-like protein 055R of Aedes vexans (Inland floodwater mosquito).